The primary structure comprises 736 residues: MEIGTEISRKIRSAIKGKLQELGAYVDEELPDYIMVMVANKKSQDQMTEDLSLFLGNNTIRFTVWLHGVLDKLRSVTTEPSSLKSSDTNIFDSNVPSNKSNFSRGDERRHEAAVPPLAIPSTRPEKRDSRVSTSSQESKTTNVRQTYDDGAATRLMSTVKPLREPAPSEDVIDIKPEPDDLIDEDLNFVQENPLSQKKPTVTLTYGSSRPSIEIYRPPASRNADSGVHLNRLQFQQQQNSIHAAKQLDMQNSWVYETGRLCEPEVLNSLEETYSPFFRNNSEKMSMEDENFRKRKLPVVSSVVKVKKFNHDGEEEEEDDDYGSRTGSISSSVSVPAKPERRPSLPPSKQANKNLILKAISEAQESVTKTTNYSTVPQKQTLPVAPRTRTSQEELLAEVVQGQSRTPRISPPIKEEETKGDSVEKNQGTQQRQLLSRLQIDPVMAETLQMSQDYYDMESMVHADTRSFILKKPKLSEEIVVAPNQESGMKTADSLRVLSGHLMQTRDLVQPDKPASPKFIVTLDGVPSPPGYMSDQEEDMCFEGMKPVNQTAASNKGLRGLLHPQQLHLLSRQLEDPNGSFSNAEMSELSVAQKPEKLLERCKYWPACKNGDECAYHHPISPCKAFPNCKFAEKCLFVHPNCKYDAKCTKPDCPFTHVSRRIPVLSPKPAVAPPAPPSSSQLCRYFPACKKMECPFYHPKHCRFNTQCTRPDCTFYHPTINVPPRHALKWIRPQTSE.

Methionine 1 is modified (N-acetylmethionine). Composition is skewed to polar residues over residues 78 to 103 (TEPS…SNFS) and 131 to 145 (VSTS…NVRQ). The disordered stretch occupies residues 78–146 (TEPSSLKSSD…ESKTTNVRQT (69 aa)). Serine 85 is subject to Phosphoserine. Glycyl lysine isopeptide (Lys-Gly) (interchain with G-Cter in SUMO2) cross-links involve residues lysine 99, lysine 139, lysine 175, and lysine 198. Serine 240 carries the phosphoserine modification. Residue lysine 245 forms a Glycyl lysine isopeptide (Lys-Gly) (interchain with G-Cter in SUMO2) linkage. Serine 281 is subject to Phosphoserine. Residues lysine 283 and lysine 295 each participate in a glycyl lysine isopeptide (Lys-Gly) (interchain with G-Cter in SUMO2) cross-link. Residues 310-350 (HDGEEEEEDDDYGSRTGSISSSVSVPAKPERRPSLPPSKQA) are disordered. 2 positions are modified to phosphoserine: serine 327 and serine 343. At lysine 357 the chain carries N6-acetyllysine; alternate. Lysine 357 is covalently cross-linked (Glycyl lysine isopeptide (Lys-Gly) (interchain with G-Cter in SUMO2); alternate). A Glycyl lysine isopeptide (Lys-Gly) (interchain with G-Cter in SUMO2) cross-link involves residue lysine 378. A phosphoserine mark is found at serine 390 and serine 409. The segment at 398-430 (VVQGQSRTPRISPPIKEEETKGDSVEKNQGTQQ) is disordered. Positions 412–423 (IKEEETKGDSVE) are enriched in basic and acidic residues. Residue lysine 413 forms a Glycyl lysine isopeptide (Lys-Gly) (interchain with G-Cter in SUMO2) linkage. A Phosphoserine modification is found at serine 421. Lysine 489 is covalently cross-linked (Glycyl lysine isopeptide (Lys-Gly) (interchain with G-Cter in SUMO2)). Residues serine 498, serine 515, serine 527, and serine 620 each carry the phosphoserine modification. C3H1-type zinc fingers lie at residues 595–620 (EKLL…HPIS), 621–640 (PCKA…VHPN), 641–656 (CKYD…PFTH), 682–699 (CRYF…YHPK), and 701–719 (CRFN…HPTI).

This sequence belongs to the ZC3H14 family. As to quaternary structure, homodimer; facilitating circular RNAs (circRNAs) formation. Associates with the spliceosome. Interacts with HOOK2. Interacts with ZFC3H1 in a RNase-sensitive manner.

The protein resides in the nucleus speckle. Functionally, RNA-binding protein involved in the biogenesis of circular RNAs (circRNAs), which are produced by back-splicing circularization of pre-mRNAs. Acts by binding to both exon-intron boundary and 3'-UTR of pre-mRNAs to promote circRNA biogenesis through dimerization and the association with the spliceosome. Required for spermatogenesis via involvement in circRNA biogenesis. Regulates the pre-mRNA processing of ATP5MC1; preventing its degradation. Also binds the poly(A) tail of mRNAs; controlling poly(A) length in neuronal cells. This Macaca fascicularis (Crab-eating macaque) protein is Zinc finger CCCH domain-containing protein 14 (ZC3H14).